Consider the following 200-residue polypeptide: MSTVYTRPLARLVEQLQRLPGIGPKSAQRLALHLLKRPTAEVEALANALIEAKQQVGFCSVCFHLSADPVCDICRAPSRDKTVICVVADSRDVIALEKTREFKGQYHVLGGLISPMDGIGPDQLNVQPLIRRVHQTKTQEVILAINPSVEGETTTLYVGQLLKPFTRVTRIAFGLPMGGDLEYADEVTLARALEGRRDLD.

A C4-type zinc finger spans residues 59–74 (CSVCFHLSADPVCDIC). In terms of domain architecture, Toprim spans 82-176 (TVICVVADSR…RVTRIAFGLP (95 aa)).

The protein belongs to the RecR family.

In terms of biological role, may play a role in DNA repair. It seems to be involved in an RecBC-independent recombinational process of DNA repair. It may act with RecF and RecO. The sequence is that of Recombination protein RecR from Acaryochloris marina (strain MBIC 11017).